A 420-amino-acid polypeptide reads, in one-letter code: Beta-arrestin-2 (420 aa).

At Tyr48 the chain carries Phosphotyrosine. Hydroxyproline; by PHD2 is present on residues Pro176 and Pro181. Positions 240 to 409 are interaction with TRAF6; it reads ADICLFSTAQ…EDFARLRLKG (170 aa). Ser360 bears the Phosphoserine mark. Residues 374–420 are interaction with AP2B1; that stretch reads PETDAPVDTNLIEFETNYATDDDIVFEDFARLRLKGLKDEDYDDQFC. Residue Thr393 is modified to Phosphothreonine. Residues 396 to 406 carry the [DE]-X(1,2)-F-X-X-[FL]-X-X-X-R motif motif; it reads DIVFEDFARLR.

Belongs to the arrestin family. As to quaternary structure, homooligomer; the self-association is mediated by InsP6-binding. Heterooligomer with ARRB1; the association is mediated by InsP6-binding. Interacts with ADRB2 and CHRM2. Interacts with PDE4A. Interacts with PDE4D. Interacts with MAPK10, MAPK1 and MAPK3. Interacts with DRD2. Interacts with FSHR. Interacts with CLTC. Interacts with HTR2C. Interacts with CRR5. Interacts with CXCR4. Interacts with SRC. Interacts with DUSP16; the interaction is interrupted by stimulation of AGTR1 and activation of MAPK10. Interacts with CHUK; the interaction is enhanced stimulation of ADRB2. Interacts with RELA. Interacts with MDM2; the interaction is enhanced by activation of GPCRs. Interacts with SLC9A5. Interacts with TRAF6. Interacts with IGF1R. Interacts with ENG. Interacts with KIR2DL1, KIR2DL3 and KIR2DL4. Interacts with LDLR. Interacts with AP2B1. Interacts with C5AR1. Interacts with RAF1. Interacts with MAP2K1. Interacts with MAPK1. Interacts with MAPK10; the interaction enhances MAPK10 activation by MAP3K5. Interacts with MAP2K4; the interaction is enhanced by presence of MAP3K5 and MAPK10. Interacts with MAP3K5. Interacts with AKT1. Interacts with IKBKB and MAP3K14. Interacts with SMO (activated). Interacts with GSK3A and GSK3B. Associates with protein phosphatase 2A (PP2A). Interacts with CXCR4; the interaction is dependent on C-terminal phosphorylation of CXCR4 and allows activation of MAPK1 and MAPK3. Interacts with GPR143. Interacts with HCK and CXCR1 (phosphorylated). Interacts with ACKR3 and ACKR4. Interacts with ARRDC1; the interaction is direct. Interacts with GPR61, GPR62 and GPR135. Interacts (via NACHT and LRR domains) with NLRP3; this interaction is direct and inducible by omega-3 polyunsaturated fatty acids (PUFAs). Interacts with FFAR4 (via C-terminus); this interaction is stimulated by long-chain fatty acids (LCFAs). Interacts with GPR35. Interacts with GPR84. Interacts with TIGIT; this interaction inhibits the NF-kappa-B pathway. Interacts with TGFBR3. Phosphorylated at Thr-382 in the cytoplasm; probably dephosphorylated at the plasma membrane. The phosphorylation does not regulate internalization and recycling of ADRB2, interaction with clathrin or AP2B1. In terms of processing, the ubiquitination status appears to regulate the formation and trafficking of beta-arrestin-GPCR complexes and signaling. Ubiquitination appears to occur GPCR-specific. Ubiquitinated by MDM2; the ubiquitination is required for rapid internalization of ADRB2. Deubiquitinated by USP33; the deubiquitination leads to a dissociation of the beta-arrestin-GPCR complex. Stimulation of a class A GPCR, such as ADRB2, induces transient ubiquitination and subsequently promotes association with USP33. Stimulation of a class B GPCR promotes a sustained ubiquitination. Deubiquitinated by USP20; allowing USP20 to deubiquitinate TRAF6 leading to inhibition of NF-kappa-B signaling. Post-translationally, hydroxylation by PHD2 modulates the rate of internalization by slowing down recruitment to the plasma membrane and inhibiting subsequent co-internalization with class A receptors. Found in a variety of tissues. The short isoform is the most abundant form in all tissues.

The protein resides in the cytoplasm. It localises to the nucleus. Its subcellular location is the cell membrane. It is found in the membrane. The protein localises to the clathrin-coated pit. The protein resides in the cytoplasmic vesicle. Functionally, functions in regulating agonist-mediated G-protein coupled receptor (GPCR) signaling by mediating both receptor desensitization and resensitization processes. During homologous desensitization, beta-arrestins bind to the GPRK-phosphorylated receptor and sterically preclude its coupling to the cognate G-protein; the binding appears to require additional receptor determinants exposed only in the active receptor conformation. The beta-arrestins target many receptors for internalization by acting as endocytic adapters (CLASPs, clathrin-associated sorting proteins) and recruiting the GPRCs to the adapter protein 2 complex 2 (AP-2) in clathrin-coated pits (CCPs). However, the extent of beta-arrestin involvement appears to vary significantly depending on the receptor, agonist and cell type. Internalized arrestin-receptor complexes traffic to intracellular endosomes, where they remain uncoupled from G-proteins. Two different modes of arrestin-mediated internalization occur. Class A receptors, like ADRB2, OPRM1, ENDRA, D1AR and ADRA1B dissociate from beta-arrestin at or near the plasma membrane and undergo rapid recycling. Class B receptors, like AVPR2, AGTR1, NTSR1, TRHR and TACR1 internalize as a complex with arrestin and traffic with it to endosomal vesicles, presumably as desensitized receptors, for extended periods of time. Receptor resensitization then requires that receptor-bound arrestin is removed so that the receptor can be dephosphorylated and returned to the plasma membrane. Mediates endocytosis of CCR7 following ligation of CCL19 but not CCL21. Involved in internalization of P2RY1, P2RY4, P2RY6 and P2RY11 and ATP-stimulated internalization of P2RY2. Involved in phosphorylation-dependent internalization of OPRD1 and subsequent recycling or degradation. Involved in ubiquitination of IGF1R. Beta-arrestins function as multivalent adapter proteins that can switch the GPCR from a G-protein signaling mode that transmits short-lived signals from the plasma membrane via small molecule second messengers and ion channels to a beta-arrestin signaling mode that transmits a distinct set of signals that are initiated as the receptor internalizes and transits the intracellular compartment. Acts as a signaling scaffold for MAPK pathways such as MAPK1/3 (ERK1/2) and MAPK10 (JNK3). ERK1/2 and JNK3 activated by the beta-arrestin scaffold are largely excluded from the nucleus and confined to cytoplasmic locations such as endocytic vesicles, also called beta-arrestin signalosomes. Acts as a signaling scaffold for the AKT1 pathway. GPCRs for which the beta-arrestin-mediated signaling relies on both ARRB1 and ARRB2 (codependent regulation) include ADRB2, F2RL1 and PTH1R. For some GPCRs the beta-arrestin-mediated signaling relies on either ARRB1 or ARRB2 and is inhibited by the other respective beta-arrestin form (reciprocal regulation). Increases ERK1/2 signaling in AGTR1- and AVPR2-mediated activation (reciprocal regulation). Involved in CCR7-mediated ERK1/2 signaling involving ligand CCL19. Is involved in type-1A angiotensin II receptor/AGTR1-mediated ERK activity. Is involved in type-1A angiotensin II receptor/AGTR1-mediated MAPK10 activity. Is involved in dopamine-stimulated AKT1 activity in the striatum by disrupting the association of AKT1 with its negative regulator PP2A. Involved in AGTR1-mediated chemotaxis. Appears to function as signaling scaffold involved in regulation of MIP-1-beta-stimulated CCR5-dependent chemotaxis. Involved in attenuation of NF-kappa-B-dependent transcription in response to GPCR or cytokine stimulation by interacting with and stabilizing CHUK. Suppresses UV-induced NF-kappa-B-dependent activation by interacting with CHUK. The function is promoted by stimulation of ADRB2 and dephosphorylation of ARRB2. Involved in p53/TP53-mediated apoptosis by regulating MDM2 and reducing the MDM2-mediated degradation of p53/TP53. May serve as nuclear messenger for GPCRs. Upon stimulation of OR1D2, may be involved in regulation of gene expression during the early processes of fertilization. Also involved in regulation of receptors other than GPCRs. Involved in endocytosis of TGFBR2 and TGFBR3 and down-regulates TGF-beta signaling such as NF-kappa-B activation. Involved in endocytosis of low-density lipoprotein receptor/LDLR. Involved in endocytosis of smoothened homolog/Smo, which also requires GRK2. Involved in endocytosis of SLC9A5. Involved in endocytosis of ENG and subsequent TGF-beta-mediated ERK activation and migration of epithelial cells. Involved in Toll-like receptor and IL-1 receptor signaling through the interaction with TRAF6 which prevents TRAF6 autoubiquitination and oligomerization required for activation of NF-kappa-B and JUN. Involved in insulin resistance by acting as insulin-induced signaling scaffold for SRC, AKT1 and INSR. Involved in regulation of inhibitory signaling of natural killer cells by recruiting PTPN6 and PTPN11 to KIR2DL1. Involved in IL8-mediated granule release in neutrophils. Involved in the internalization of the atypical chemokine receptor ACKR3. Acts as an adapter protein coupling FFAR4 receptor to specific downstream signaling pathways, as well as mediating receptor endocytosis. During the activation step of NLRP3 inflammasome, directly associates with NLRP3 leading to inhibition of pro-inflammatory cytokine release and inhibition of inflammation. This chain is Beta-arrestin-2 (ARRB2), found in Bos taurus (Bovine).